Consider the following 196-residue polypeptide: ATP-dependent Clp protease proteolytic subunit (196 aa).

The active-site Nucleophile is S101. H126 is an active-site residue.

This sequence belongs to the peptidase S14 family. Component of the chloroplastic Clp protease core complex.

The protein localises to the plastid. It is found in the chloroplast stroma. It catalyses the reaction Hydrolysis of proteins to small peptides in the presence of ATP and magnesium. alpha-casein is the usual test substrate. In the absence of ATP, only oligopeptides shorter than five residues are hydrolyzed (such as succinyl-Leu-Tyr-|-NHMec, and Leu-Tyr-Leu-|-Tyr-Trp, in which cleavage of the -Tyr-|-Leu- and -Tyr-|-Trp bonds also occurs).. Cleaves peptides in various proteins in a process that requires ATP hydrolysis. Has a chymotrypsin-like activity. Plays a major role in the degradation of misfolded proteins. The sequence is that of ATP-dependent Clp protease proteolytic subunit from Lepidium virginicum (Virginia pepperweed).